Consider the following 2303-residue polypeptide: Adenomatous polyposis coli protein 2 (2303 aa).

Residues 8–59 adopt a coiled-coil conformation; the sequence is YEQLVRQVEALKAENSHLRQELRDNSSHLSKLETETSGMKEVLKHLQGKLEQ. Disordered stretches follow at residues 94–120 and 247–270; these read PTLG…KDSF and VPVD…QPGN. ARM repeat units follow at residues 302–341, 479–518, 522–562, 566–609, 615–654, and 657–696; these read PESC…PGAK, ANKA…NLSW, INSK…NLSA, ENKA…NVSS, EDYR…NLSA, and ARDQ…NLLA. Disordered regions lie at residues 744-764 and 816-835; these read KQGP…LRHL and LART…DTSG. The span at 825–834 shows a compositional bias: basic and acidic residues; sequence GGKEAEKDTS. Residues 840-864 are a coiled coil; sequence AAKAKAKLALAVARIDQLVEDISAL. Disordered regions lie at residues 867 to 908, 953 to 986, 1069 to 1152, and 1173 to 1228; these read SSDD…AGSR, RRED…ATSA, RCSS…ENYV, and SPSI…EATQ. Low complexity predominate over residues 869 to 878; sequence DDSFSLSSGD. Repeat unit 1 spans residues 1058–1077; the sequence is LAAQEGPLSLSRCSSLSSLS. The segment at 1058 to 1587 is 5 X 20 AA approximate repeat of F-X-V-E-X-T-P-X-C-F-S-R-X-S-S-L-S-S-L-S; it reads LAAQEGPLSL…SLSSSASSLS (530 aa). An interaction with CTNNB1 region spans residues 1058–1587; it reads LAAQEGPLSL…SLSSSASSLS (530 aa). A compositionally biased stretch (low complexity) spans 1069–1084; the sequence is RCSSLSSLSSAGRPGP. Residues 1088–1101 show a composition bias toward acidic residues; sequence GDLDDSDSSLEGLE. A compositionally biased stretch (polar residues) spans 1143–1152; sequence TPSSSSENYV. Repeat 2 spans residues 1150–1169; that stretch reads NYVQETPLVLSRCSSVSSLG. Residues 1173–1186 show a composition bias toward low complexity; that stretch reads SPSIASSIPSEPCS. Residues 1202-1212 show a composition bias toward polar residues; that stretch reads PGQTMPPSRSK. Repeat 3 spans residues 1263–1282; the sequence is FTVEKPDENFSCASSLSALA. Disordered regions lie at residues 1307–1335, 1382–1497, 1510–1684, 1724–2031, and 2046–2232; these read GAGG…PRGA, PAQE…QSLC, YGND…LDSV, LSVG…RGRP, and LRAA…DVDG. Positions 1390-1410 are enriched in polar residues; the sequence is TDSAEGTPVNFSSAASLSDET. Repeat unit 4 spans residues 1391-1410; it reads DSAEGTPVNFSSAASLSDET. 2 stretches are compositionally biased toward basic and acidic residues: residues 1477–1489 and 1537–1548; these read ADKD…RTRG and FTRERPQGRKEA. Copy 5 of the repeat occupies 1568–1587; that stretch reads LIADETPPCYSLSSSASSLS. Residues 1578 to 1589 show a composition bias toward low complexity; it reads SLSSSASSLSEP. Ser1585 and Ser1587 each carry phosphoserine. Residues 1638-1654 show a composition bias toward basic residues; the sequence is PRRRPPVSGLRRRKPRA. 2 stretches are compositionally biased toward basic and acidic residues: residues 1655-1671 and 1739-1755; these read TRLD…RGEE and RQAE…EKRG. The segment covering 1819-1830 has biased composition (low complexity); the sequence is APPCLAQPAAPA. A required for localization to microtubules and function in microtubule stabilization region spans residues 1821-1900; sequence PCLAQPAAPA…PPVTQAAGAL (80 aa). The segment covering 1851–1860 has biased composition (polar residues); sequence ELATLSQPPR. Low complexity-rich tracts occupy residues 1868–1886, 1971–1984, 2011–2026, 2049–2062, and 2113–2123; these read LAKT…SQPL, GLVR…SGSE, LSSA…GASP, APRQ…QRPP, and GAVPAAPASAD. Positions 2067–2144 are interaction with MAPRE1 and MAPRE3; sequence SPGERPARRT…PLPRVAAPGT (78 aa). Residues 2124 to 2135 are compositionally biased toward basic and acidic residues; sequence AARRSSDGEPRP. Positions 2200-2209 are enriched in polar residues; that stretch reads KTNSSTSPSL.

It belongs to the adenomatous polyposis coli (APC) family. Interacts with PSRC1. Interacts with APC. Interacts with CTNNB1. Interacts with MAPRE1 and MAPRE3. Interacts with TP53BP. Interacts possibly with AXIN2. As to expression, widely expressed (at protein level). Specifically expressed in the CNS.

The protein localises to the cytoplasm. It localises to the cytoskeleton. The protein resides in the golgi apparatus. Its subcellular location is the perinuclear region. Stabilizes microtubules and may regulate actin fiber dynamics through the activation of Rho family GTPases. May also function in Wnt signaling by promoting the rapid degradation of CTNNB1. This is Adenomatous polyposis coli protein 2 from Homo sapiens (Human).